Here is a 204-residue protein sequence, read N- to C-terminus: Protein GrpE (204 aa).

A disordered region spans residues 1 to 55 (MSSKNNPESETKAKNKWEKVMEAEEEQEEGRGDGSQEMEPHREGLEFPSREKLEG). 2 stretches are compositionally biased toward basic and acidic residues: residues 7–22 (PESE…KVME) and 29–55 (EGRG…KLEG).

It belongs to the GrpE family. As to quaternary structure, homodimer.

The protein resides in the cytoplasm. Participates actively in the response to hyperosmotic and heat shock by preventing the aggregation of stress-denatured proteins, in association with DnaK and GrpE. It is the nucleotide exchange factor for DnaK and may function as a thermosensor. Unfolded proteins bind initially to DnaJ; upon interaction with the DnaJ-bound protein, DnaK hydrolyzes its bound ATP, resulting in the formation of a stable complex. GrpE releases ADP from DnaK; ATP binding to DnaK triggers the release of the substrate protein, thus completing the reaction cycle. Several rounds of ATP-dependent interactions between DnaJ, DnaK and GrpE are required for fully efficient folding. In Coxiella burnetii (strain RSA 331 / Henzerling II), this protein is Protein GrpE.